Here is a 298-residue protein sequence, read N- to C-terminus: 2-dehydro-3-deoxy-D-arabinonate dehydratase (298 aa).

Residue isoleucine 86 coordinates substrate. Glutamate 148, glutamate 150, and aspartate 169 together coordinate Mg(2+). Lysine 187 and threonine 261 together coordinate substrate.

The protein belongs to the FAH family. In terms of assembly, homotetramer. Mg(2+) serves as cofactor. Requires Ca(2+) as cofactor.

The enzyme catalyses 2-dehydro-3-deoxy-D-arabinonate = 2,5-dioxopentanoate + H2O. Functionally, participates in a pentose oxidation pathway that converts D-arabinonate to 2-oxoglutarate. This is 2-dehydro-3-deoxy-D-arabinonate dehydratase from Saccharolobus solfataricus (strain ATCC 35092 / DSM 1617 / JCM 11322 / P2) (Sulfolobus solfataricus).